The following is an 837-amino-acid chain: PE-PGRS family protein PE_PGRS4 (837 aa).

Residues 4–94 (VIAAPEVIAA…GAYAAAEAAA (91 aa)) enclose the PE domain. Gly residues predominate over residues 811 to 825 (NGGKAGGTPGAGGTS). Residues 811-837 (NGGKAGGTPGAGGTSGLIIGENGLNGL) form a disordered region. Residues 826-837 (GLIIGENGLNGL) show a composition bias toward low complexity.

The protein belongs to the mycobacterial PE family. PGRS subfamily.

The polypeptide is PE-PGRS family protein PE_PGRS4 (Mycobacterium tuberculosis (strain ATCC 25618 / H37Rv)).